Consider the following 289-residue polypeptide: Phosphoribulokinase (289 aa).

Residue 12 to 20 participates in ATP binding; sequence GSSGAGTTT.

This sequence belongs to the phosphoribulokinase family.

It carries out the reaction D-ribulose 5-phosphate + ATP = D-ribulose 1,5-bisphosphate + ADP + H(+). Its pathway is carbohydrate biosynthesis; Calvin cycle. This is Phosphoribulokinase (cbbP) from Rhizobium meliloti (strain 1021) (Ensifer meliloti).